We begin with the raw amino-acid sequence, 476 residues long: Ribosomal RNA small subunit methyltransferase F (476 aa).

Residues 124 to 130 (ASAPGSK), Glu-148, Asp-175, and Asp-193 contribute to the S-adenosyl-L-methionine site. Catalysis depends on Cys-246, which acts as the Nucleophile.

The protein belongs to the class I-like SAM-binding methyltransferase superfamily. RsmB/NOP family.

The protein resides in the cytoplasm. The enzyme catalyses cytidine(1407) in 16S rRNA + S-adenosyl-L-methionine = 5-methylcytidine(1407) in 16S rRNA + S-adenosyl-L-homocysteine + H(+). In terms of biological role, specifically methylates the cytosine at position 1407 (m5C1407) of 16S rRNA. This is Ribosomal RNA small subunit methyltransferase F from Photobacterium profundum (strain SS9).